A 968-amino-acid chain; its full sequence is RNA polymerase-associated protein RapA (968 aa).

Positions 164 to 334 constitute a Helicase ATP-binding domain; that stretch reads DVGRRHAPRV…FARLRLLDPN (171 aa). ATP is bound at residue 177–184; it reads DEVGLGKT. Positions 280 to 283 match the DEAH box motif; the sequence is DEAH. Residues 490–662 enclose the Helicase C-terminal domain; that stretch reads RVEWLMGYLT…YLASPDQTEG (173 aa).

It belongs to the SNF2/RAD54 helicase family. RapA subfamily. In terms of assembly, interacts with the RNAP. Has a higher affinity for the core RNAP than for the holoenzyme. Its ATPase activity is stimulated by binding to RNAP.

Its function is as follows. Transcription regulator that activates transcription by stimulating RNA polymerase (RNAP) recycling in case of stress conditions such as supercoiled DNA or high salt concentrations. Probably acts by releasing the RNAP, when it is trapped or immobilized on tightly supercoiled DNA. Does not activate transcription on linear DNA. Probably not involved in DNA repair. The chain is RNA polymerase-associated protein RapA from Shigella boydii serotype 4 (strain Sb227).